A 343-amino-acid chain; its full sequence is MIKLSNITKVFQQGARTIQALNNVSLHVPAGQIYGVIGASGAGKSTLIRCVNLLERPTEGSVQVGGQELTTLSESELTKARRQIGMIFQHFNLLSSRTVFGNVALPLELDNTPKEEIKRRVTELLDLVGLGDKHDSYPANLSGGQKQRVAIARALASNPKVLLCDEATSALDPATTRSILELLKDINRRLGLTILLITHEMDVVKRICDCVAVISNGELIEQDTVSEVFSHPKTPLAQKFIQSTLHLDIPEDYQARLKASPETDSVPMLRMEFTGQSVDAPLLSETARRFNVNNNIISAQMDYAGGVKFGIMLTEMHGTQEETQAAIAWLQDHHVKVEVLGYV.

In terms of domain architecture, ABC transporter spans 2–241 (IKLSNITKVF…PKTPLAQKFI (240 aa)). ATP is bound at residue 38 to 45 (GASGAGKS).

This sequence belongs to the ABC transporter superfamily. Methionine importer (TC 3.A.1.24) family. The complex is composed of two ATP-binding proteins (MetN), two transmembrane proteins (MetI) and a solute-binding protein (MetQ).

Its subcellular location is the cell inner membrane. The catalysed reaction is L-methionine(out) + ATP + H2O = L-methionine(in) + ADP + phosphate + H(+). It carries out the reaction D-methionine(out) + ATP + H2O = D-methionine(in) + ADP + phosphate + H(+). Its function is as follows. Part of the ABC transporter complex MetNIQ involved in methionine import. Responsible for energy coupling to the transport system. In Salmonella choleraesuis (strain SC-B67), this protein is Methionine import ATP-binding protein MetN 1.